A 260-amino-acid polypeptide reads, in one-letter code: uncharacterized protein (260 aa).

The N-terminal stretch at 1–22 (MKSIKRIGLCISLLILIIFATS) is a signal peptide. Cysteine 23 is lipidated: N-palmitoyl cysteine. Cysteine 23 carries the S-diacylglycerol cysteine lipid modification.

The protein belongs to the staphylococcal tandem lipoprotein family.

It localises to the cell membrane. This is an uncharacterized protein from Staphylococcus aureus (strain N315).